Reading from the N-terminus, the 484-residue chain is Phosphatidylinositol N-acetylglucosaminyltransferase subunit A (484 aa).

Over 1 to 421 the chain is Cytoplasmic; that stretch reads MACRGGAGNG…RLDRLISHCG (421 aa). Phosphoserine is present on residues S21 and S24. Residues 422-442 form a helical membrane-spanning segment; the sequence is PVTGYIFALLAVFNFLFLIFL. Residues 443–484 are Lumenal-facing; the sequence is RWMTPDSIIDVAIDATGPRGAWTNNYSHSKRGGENNEISETR. An N-linked (GlcNAc...) asparagine glycan is attached at N467.

Belongs to the glycosyltransferase group 1 family. Glycosyltransferase 4 subfamily. Component of the glycosylphosphatidylinositol-N-acetylglucosaminyltransferase (GPI-GnT) complex composed at least by PIGA, PIGC, PIGH, PIGP, PIGQ, PIGY and DPM2. Interacts with PIGC, PIGH, PIGP, PIGQ and DPM2. Interacts directly with PIGY; this interaction regulates glycosylphosphatidylinositol-N-acetylglucosaminyltransferase activity. Interacts with PIGQ.

It is found in the endoplasmic reticulum membrane. It catalyses the reaction a 1,2-diacyl-sn-glycero-3-phospho-(1D-myo-inositol) + UDP-N-acetyl-alpha-D-glucosamine = a 6-(N-acetyl-alpha-D-glucosaminyl)-1-(1,2-diacyl-sn-glycero-3-phospho)-1D-myo-inositol + UDP + H(+). It functions in the pathway glycolipid biosynthesis; glycosylphosphatidylinositol-anchor biosynthesis. Catalytic subunit of the glycosylphosphatidylinositol-N-acetylglucosaminyltransferase (GPI-GnT) complex that catalyzes the transfer of N-acetylglucosamine from UDP-N-acetylglucosamine to phosphatidylinositol and participates in the first step of GPI biosynthesis. The sequence is that of Phosphatidylinositol N-acetylglucosaminyltransferase subunit A from Homo sapiens (Human).